Consider the following 752-residue polypeptide: DNA topoisomerase 4 subunit A (752 aa).

In terms of domain architecture, Topo IIA-type catalytic spans 31–494; it reads LPFIGDGLKP…EAKAMSEHDM (464 aa). The O-(5'-phospho-DNA)-tyrosine intermediate role is filled by Y120. Positions 472 to 492 are disordered; that stretch reads YGDDRRSPLREREEAKAMSEH. Basic and acidic residues predominate over residues 473-492; that stretch reads GDDRRSPLREREEAKAMSEH.

It belongs to the type II topoisomerase GyrA/ParC subunit family. ParC type 1 subfamily. In terms of assembly, heterotetramer composed of ParC and ParE.

Its subcellular location is the cell membrane. It carries out the reaction ATP-dependent breakage, passage and rejoining of double-stranded DNA.. Topoisomerase IV is essential for chromosome segregation. It relaxes supercoiled DNA. Performs the decatenation events required during the replication of a circular DNA molecule. The sequence is that of DNA topoisomerase 4 subunit A from Salmonella typhimurium (strain LT2 / SGSC1412 / ATCC 700720).